Reading from the N-terminus, the 214-residue chain is Dephospho-CoA kinase (214 aa).

The DPCK domain occupies 20–214; it reads RIGITGGIAS…KLQLKKLYKF (195 aa). 28–33 contacts ATP; the sequence is ASGKTI.

It belongs to the CoaE family.

It is found in the cytoplasm. The catalysed reaction is 3'-dephospho-CoA + ATP = ADP + CoA + H(+). It functions in the pathway cofactor biosynthesis; coenzyme A biosynthesis; CoA from (R)-pantothenate: step 5/5. Functionally, catalyzes the phosphorylation of the 3'-hydroxyl group of dephosphocoenzyme A to form coenzyme A. In Prochlorococcus marinus (strain NATL2A), this protein is Dephospho-CoA kinase.